The primary structure comprises 229 residues: Small ribosomal subunit protein uS3 (229 aa).

Residues 39-107 (VRQYLTEKLK…TAQINIAEIR (69 aa)) enclose the KH type-2 domain.

This sequence belongs to the universal ribosomal protein uS3 family. Part of the 30S ribosomal subunit. Forms a tight complex with proteins S10 and S14.

Binds the lower part of the 30S subunit head. Binds mRNA in the 70S ribosome, positioning it for translation. The protein is Small ribosomal subunit protein uS3 of Shewanella denitrificans (strain OS217 / ATCC BAA-1090 / DSM 15013).